The chain runs to 297 residues: Streptogrisin-A (297 aa).

An N-terminal signal peptide occupies residues 1-38 (MTFKRFSPLSSTSRYARLLAVASGLVAAAALATPSAVA). Positions 39 to 115 (APEAESKATV…VKRAEGKFTP (77 aa)) are excised as a propeptide. Cys130 and Cys150 are oxidised to a cystine. Active-site charge relay system residues include His149, Asp171, and Ser253. A disulfide bridge connects residues Cys247 and Cys274.

It belongs to the peptidase S1 family. In terms of assembly, monomer.

The catalysed reaction is Hydrolysis of proteins with specificity similar to chymotrypsin.. In terms of biological role, has a primary specificity for large aliphatic or aromatic amino acids. In Streptomyces griseus, this protein is Streptogrisin-A (sprA).